The chain runs to 247 residues: Protein NipSnap homolog 3A (247 aa).

Lys48 and Lys166 each carry N6-acetyllysine.

The protein belongs to the NipSnap family.

Its subcellular location is the cytoplasm. The protein resides in the cytosol. This chain is Protein NipSnap homolog 3A (NIPSNAP3A), found in Pongo abelii (Sumatran orangutan).